A 300-amino-acid polypeptide reads, in one-letter code: Bis(5'-nucleosyl)-tetraphosphatase, symmetrical (300 aa).

This sequence belongs to the Ap4A hydrolase family.

It catalyses the reaction P(1),P(4)-bis(5'-adenosyl) tetraphosphate + H2O = 2 ADP + 2 H(+). In terms of biological role, hydrolyzes diadenosine 5',5'''-P1,P4-tetraphosphate to yield ADP. In Pseudomonas syringae pv. tomato (strain ATCC BAA-871 / DC3000), this protein is Bis(5'-nucleosyl)-tetraphosphatase, symmetrical.